Reading from the N-terminus, the 351-residue chain is Selenide, water dikinase (351 aa).

Selenocysteine 15 is an active-site residue. Position 15 (selenocysteine 15) is a non-standard amino acid, selenocysteine. ATP contacts are provided by residues lysine 18 and 47-49 (DNE). Position 50 (aspartate 50) interacts with Mg(2+). ATP contacts are provided by residues aspartate 67, aspartate 90, and 138–140 (GHS). Aspartate 90 contributes to the Mg(2+) binding site. Residue aspartate 227 coordinates Mg(2+).

It belongs to the selenophosphate synthase 1 family. Class I subfamily. Homodimer. Requires Mg(2+) as cofactor.

The enzyme catalyses hydrogenselenide + ATP + H2O = selenophosphate + AMP + phosphate + 2 H(+). In terms of biological role, synthesizes selenophosphate from selenide and ATP. This is Selenide, water dikinase from Nitratidesulfovibrio vulgaris (strain DP4) (Desulfovibrio vulgaris).